The primary structure comprises 3312 residues: Cadherin EGF LAG seven-pass G-type receptor 3 (3312 aa).

Positions 1-32 (MMARRPPWRGLGGRSTPILLLLLLSLFPLSQE) are cleaved as a signal peptide. Residues 33–2540 (ELGGGGHQGW…RLEGDLELLA (2508 aa)) lie on the Extracellular side of the membrane. 3 disordered regions span residues 90-112 (GRRQ…LGIE), 143-199 (GRTG…RKRV), and 212-306 (GSKG…EARK). A compositionally biased stretch (low complexity) spans 159-173 (SSGVPGSGNSSPLPS). Residues 290 to 299 (RPGPRPPGLP) show a composition bias toward pro residues. 9 Cadherin domains span residues 326-433 (PQYN…SPVF), 434-545 (EQAQ…APQF), 546-651 (SEKR…IPIF), 652-756 (VSTP…RPEF), 757-858 (TMKE…RPVF), 859-961 (QSAH…APQF), 962-1067 (VASH…APVF), 1068-1169 (PAEE…SPVL), and 1170-1265 (NNFQ…RVVI). N-linked (GlcNAc...) asparagine glycosylation occurs at asparagine 632. The N-linked (GlcNAc...) asparagine glycan is linked to asparagine 847. N-linked (GlcNAc...) asparagine glycans are attached at residues asparagine 1182, asparagine 1222, asparagine 1317, and asparagine 1327. One can recognise an EGF-like 1; calcium-binding domain in the interval 1375-1433 (DDNVCLREPCENYMKCVSVLRFDSSAPFLASASTLFRPIQPIAGLRCRCPPGFTGDFCE). 9 disulfide bridges follow: cysteine 1379/cysteine 1390, cysteine 1384/cysteine 1421, cysteine 1423/cysteine 1432, cysteine 1439/cysteine 1450, cysteine 1444/cysteine 1459, cysteine 1461/cysteine 1470, cysteine 1479/cysteine 1490, cysteine 1484/cysteine 1500, and cysteine 1502/cysteine 1513. The EGF-like 2; calcium-binding domain maps to 1435 to 1471 (ELDLCYSNPCRNGGACARREGGYTCVCRPRFTGEDCE). The EGF-like 3; calcium-binding domain maps to 1475 to 1514 (EAGRCVPGVCRNGGTCTDAPNGGFRCQCPAGGAFEGPRCE). The 205-residue stretch at 1515–1719 (VAARSFPPSS…VANNGTMAGC (205 aa)) folds into the Laminin G-like 1 domain. Residues asparagine 1649 and asparagine 1713 are each glycosylated (N-linked (GlcNAc...) asparagine). 4 cysteine pairs are disulfide-bonded: cysteine 1693-cysteine 1719, cysteine 1726-cysteine 1737, cysteine 1731-cysteine 1746, and cysteine 1748-cysteine 1757. The region spanning 1722 to 1758 (KLHFCDSGPCKNSGFCSERWGSFSCDCPVGFGGKDCQ) is the EGF-like 4; calcium-binding domain. Residues 1764–1944 (PHHFRGNGTL…SHRVNAEPGC (181 aa)) enclose the Laminin G-like 2 domain. A glycan (N-linked (GlcNAc...) asparagine) is linked at asparagine 1770. Intrachain disulfides connect cysteine 1915–cysteine 1944, cysteine 1950–cysteine 1961, cysteine 1955–cysteine 1970, cysteine 1972–cysteine 1981, cysteine 1985–cysteine 1996, cysteine 1990–cysteine 2008, cysteine 2010–cysteine 2019, cysteine 2027–cysteine 2040, and cysteine 2042–cysteine 2052. The EGF-like 5; calcium-binding domain maps to 1946-1982 (VTNACASGPCPPHADCRDLWQTFSCTCQPGYYGPGCV). Aspartate 1963 is modified ((3R)-3-hydroxyaspartate). In terms of domain architecture, EGF-like 6; calcium-binding spans 1983–2020 (DACLLNPCQNQGSCRHLPGAPHGYTCDCVGGYFGHHCE). The EGF-like 7; calcium-binding domain maps to 2021–2053 (HRMDQQCPRGWWGSPTCGPCNCDVHKGFDPNCN). N-linked (GlcNAc...) asparagine glycosylation is present at asparagine 2053. The region spanning 2055-2090 (TNGQCHCKEFHYRPRGSDSCLPCDCYPVGSTSRSCA) is the EGF-like 8; calcium-binding domain. 5 disulfide bridges follow: cysteine 2059–cysteine 2074, cysteine 2061–cysteine 2077, cysteine 2079–cysteine 2089, cysteine 2098–cysteine 2107, and cysteine 2110–cysteine 2122. The Laminin EGF-like domain occupies 2077–2124 (CDCYPVGSTSRSCAPHSGQCPCRPGALGRQCNSCDSPFAEVTASGCRV). Tyrosine 2126 is modified (phosphotyrosine). N-linked (GlcNAc...) asparagine glycosylation is found at asparagine 2177, asparagine 2196, asparagine 2386, asparagine 2474, and asparagine 2506. Residues 2361–2399 (THVLLPSQSPRPSPSEVLPTSSSIENSTTSSVVPPPAPP) form a disordered region. Positions 2368-2530 (QSPRPSPSEV…GVLMDASPRE (163 aa)) constitute a GAIN-B domain. A compositionally biased stretch (low complexity) spans 2380-2391 (TSSSIENSTTSS). Intrachain disulfides connect cysteine 2480-cysteine 2512 and cysteine 2500-cysteine 2514. A GPS region spans residues 2480-2530 (CVQWDPPGLAEQHGVWTARDCELVHRNGSHARCRCSRTGTFGVLMDASPRE). Residues 2541-2561 (VFTHVVVAVSVAALVLTAAIL) traverse the membrane as a helical segment. The Cytoplasmic portion of the chain corresponds to 2562 to 2572 (LSLRSLKSNVR). The chain crosses the membrane as a helical span at residues 2573–2593 (GIHANVAAALGVAELLFLLGI). At 2594 to 2601 (HRTHNQLV) the chain is on the extracellular side. A helical transmembrane segment spans residues 2602–2622 (CTAVAILLHYFFLSTFAWLFV). Over 2623 to 2643 (QGLHLYRMQVEPRNVDRGAMR) the chain is Cytoplasmic. Residues 2644 to 2664 (FYHALGWGVPAVLLGLAVGLD) traverse the membrane as a helical segment. Residues 2665 to 2681 (PEGYGNPDFCWISVHEP) are Extracellular-facing. The helical transmembrane segment at 2682-2702 (LIWSFAGPVVLVIVMNGTMFL) threads the bilayer. The Cytoplasmic portion of the chain corresponds to 2703–2725 (LAARTSCSTGQREAKKTSALTLR). Residues 2726-2746 (SSFLLLLLVSASWLFGLLAVN) traverse the membrane as a helical segment. At 2747 to 2753 (HSILAFH) the chain is on the extracellular side. The helical transmembrane segment at 2754–2774 (YLHAGLCGLQGLAVLLLFCVL) threads the bilayer. The Cytoplasmic portion of the chain corresponds to 2775-3312 (NADARAAWMP…SEVPRSEGHS (538 aa)). Disordered regions lie at residues 2888–2927 (AGAD…QRPL) and 2978–3006 (TSKD…AQRQ). Over residues 2890–2900 (ADSDSDSDLSL) the composition is skewed to acidic residues. Tyrosine 3051 bears the Phosphotyrosine mark. 2 disordered regions span residues 3086 to 3243 (EEAP…TEQL) and 3256 to 3312 (SALS…EGHS). Serine 3097 carries the phosphoserine modification. Composition is skewed to low complexity over residues 3175-3198 (SPQR…SRSS), 3256-3265 (SALSSVQSSS), and 3272-3281 (TTATPSATAS). The segment covering 3287-3300 (TPRSATSHSISELS) has biased composition (polar residues).

The protein belongs to the G-protein coupled receptor 2 family. LN-TM7 subfamily.

Its subcellular location is the cell membrane. Its function is as follows. Receptor that may have an important role in cell/cell signaling during nervous system formation. This chain is Cadherin EGF LAG seven-pass G-type receptor 3 (CELSR3), found in Homo sapiens (Human).